Here is a 222-residue protein sequence, read N- to C-terminus: Triosephosphate isomerase (222 aa).

A substrate-binding site is contributed by 9-11; it reads NLK. His-93 (electrophile) is an active-site residue. The active-site Proton acceptor is Glu-141. Residues Ile-146, Gly-181, and 202 to 203 each bind substrate; that span reads AS.

This sequence belongs to the triosephosphate isomerase family. In terms of assembly, homotetramer; dimer of dimers.

Its subcellular location is the cytoplasm. It catalyses the reaction D-glyceraldehyde 3-phosphate = dihydroxyacetone phosphate. Its pathway is carbohydrate biosynthesis; gluconeogenesis. It functions in the pathway carbohydrate degradation; glycolysis; D-glyceraldehyde 3-phosphate from glycerone phosphate: step 1/1. Involved in the gluconeogenesis. Catalyzes stereospecifically the conversion of dihydroxyacetone phosphate (DHAP) to D-glyceraldehyde-3-phosphate (G3P). This is Triosephosphate isomerase from Methanoculleus marisnigri (strain ATCC 35101 / DSM 1498 / JR1).